The primary structure comprises 347 residues: Fe(2+) transport protein 1 (347 aa).

An N-terminal signal peptide occupies residues 1–22; it reads MASNSALLMKTIFLVLIFVSFA. Over 23–52 the chain is Extracellular; the sequence is ISPATSTAPEECGSESANPCVNKAKALPLK. Residues 53 to 73 traverse the membrane as a helical segment; that stretch reads VIAIFVILIASMIGVGAPLFS. The Cytoplasmic portion of the chain corresponds to 74-84; it reads RNVSFLQPDGN. The chain crosses the membrane as a helical span at residues 85-105; sequence IFTIIKCFASGIILGTGFMHV. Over 106 to 125 the chain is Extracellular; the sequence is LPDSFEMLSSICLEENPWHK. Residues 126–146 traverse the membrane as a helical segment; the sequence is FPFSGFLAMLSGLITLAIDSM. The Cytoplasmic segment spans residues 147–192; it reads ATSLYTSKNAVGIMPHGHGHGHGPANDVTLPIKEDDSSNAQLLRYR. Residues Lys154 and Lys179 each participate in a glycyl lysine isopeptide (Lys-Gly) (interchain with G-Cter in ubiquitin) cross-link. The helical transmembrane segment at 193 to 213 threads the bilayer; sequence VIAMVLELGIIVHSVVIGLSL. Over 214–224 the chain is Extracellular; the sequence is GATSDTCTIKG. Residues 225–245 form a helical membrane-spanning segment; sequence LIAALCFHQMFEGMGLGGCIL. At 246 to 254 the chain is on the cytoplasmic side; sequence QAEYTNMKK. Residues 255 to 275 form a helical membrane-spanning segment; sequence FVMAFFFAVTTPFGIALGIAL. At 276–286 the chain is on the extracellular side; the sequence is STVYQDNSPKA. A helical transmembrane segment spans residues 287-307; the sequence is LITVGLLNACSAGLLIYMALV. Residues 308-326 lie on the Cytoplasmic side of the membrane; that stretch reads DLLAAEFMGPKLQGSIKMQ. Residues 327 to 347 traverse the membrane as a helical segment; it reads FKCLIAALLGCGGMSIIAKWA.

This sequence belongs to the ZIP transporter (TC 2.A.5) family. In terms of assembly, interacts with FREE1. In terms of processing, monoubiquitinated on several Lys residues. Monoubiquitination controls trafficking from the plasma membrane and targeting to the vacuole. As to expression, expressed in the external cell layers of the root including the lateral branching zone. Also detected in flowers before pollination.

The protein resides in the cell membrane. It is found in the early endosome. The protein localises to the golgi apparatus. It localises to the trans-Golgi network. Its subcellular location is the vacuole. Its function is as follows. High-affinity iron transporter that plays a key role in the uptake of iron from the rhizosphere across the plasma membrane in the root epidermal layer. Acts as the principal regulator of iron homeostasis in planta. Also mediates the heavy metals uptake under iron-deficiency by its ability to transport cobalt, cadmium, manganese and/or zinc ions. The sequence is that of Fe(2+) transport protein 1 (IRT1) from Arabidopsis thaliana (Mouse-ear cress).